The sequence spans 305 residues: Mas-related G-protein coupled receptor member A7 (305 aa).

The Extracellular portion of the chain corresponds to 1–17 (MDETSPRSIDIESLIPN). Residues 18 to 38 (LMIIIFGLVGLTGNAIVLWLL) traverse the membrane as a helical segment. Topologically, residues 39 to 46 (GFCLHRNA) are cytoplasmic. The helical transmembrane segment at 47-67 (FLVYILNLALADFLFLLCHFI) threads the bilayer. Residues 68 to 81 (NSAMFLLKVPIPNG) lie on the Extracellular side of the membrane. A helical membrane pass occupies residues 82–102 (IFVYCFYTIKMVLYITGLSML). At 103–129 (SAISTERCLSVLCPIWYHCRRPEHTST) the chain is on the cytoplasmic side. Residues 130 to 150 (VMCAVIWIFSVLICILKEYFC) form a helical membrane-spanning segment. At 151–167 (DFFGTKLGNYYVCQASN) the chain is on the extracellular side. Residues 168-188 (FFMGAYLMFLFVVLCLSTLAL) traverse the membrane as a helical segment. Topologically, residues 189–211 (LARLFCGAEKMKFTRLFVTIMLT) are cytoplasmic. A helical membrane pass occupies residues 212 to 232 (ILVFLLCGLPWGFFWFLLIWI). Residues 233–244 (KGGFSVLDYRLY) are Extracellular-facing. Residues 245-265 (LASIVLTVVNSCANPIIYFFV) form a helical membrane-spanning segment. At 266 to 305 (GSFRHRLKHQTLKMVLQSALQDTPETHENMVEMSRIKAEQ) the chain is on the cytoplasmic side.

It belongs to the G-protein coupled receptor 1 family. Mas subfamily. As to expression, expressed in a subset of sensory neurons that includes nociceptors. Expressed in the subclass of non-peptidergic sensory neurons that are IB4(+) and VR1(-).

The protein localises to the cell membrane. Functionally, orphan receptor. May be a receptor for RFamide-family neuropeptides such as NPFF and NPAF, which are analgesic in vivo. May regulate nociceptor function and/or development, including the sensation or modulation of pain. The chain is Mas-related G-protein coupled receptor member A7 (Mrgpra7) from Mus musculus (Mouse).